Here is a 226-residue protein sequence, read N- to C-terminus: Protein-L-isoaspartate(D-aspartate) O-methyltransferase (226 aa).

Residues valine 57–serine 60, histidine 65, serine 89, glutamate 115–histidine 116, aspartate 147–glycine 148, and threonine 222 each bind S-adenosyl-L-homocysteine. Residue serine 60 is part of the active site.

It belongs to the methyltransferase superfamily. L-isoaspartyl/D-aspartyl protein methyltransferase family. As to quaternary structure, monomer.

The protein localises to the cytoplasm. Its subcellular location is the cytosol. It carries out the reaction [protein]-L-isoaspartate + S-adenosyl-L-methionine = [protein]-L-isoaspartate alpha-methyl ester + S-adenosyl-L-homocysteine. Functionally, initiates the repair of damaged proteins by catalyzing methyl esterification of L-isoaspartyl and D-aspartyl residues produced by spontaneous isomerization and racemization of L-aspartyl and L-asparaginyl residues in aging peptides and proteins. In Drosophila melanogaster (Fruit fly), this protein is Protein-L-isoaspartate(D-aspartate) O-methyltransferase (Pcmt).